The chain runs to 703 residues: Solute carrier family 28 member 3 (703 aa).

Basic and acidic residues predominate over residues 1-19 (MSRADPGKNSEPSESKMSL). The tract at residues 1-93 (MSRADPGKNS…DPEDDSEDEH (93 aa)) is disordered. Residues 1-117 (MSRADPGKNS…FCRKHRVVLR (117 aa)) are Cytoplasmic-facing. Residues 44 to 61 (QNTPGNSTVRNRVVQSGE) show a composition bias toward polar residues. Residues 63-72 (GHAKQDDRQI) show a composition bias toward basic and acidic residues. Residues 118-138 (STIWAVLLTGFLALVIAACAI) traverse the membrane as a helical segment. Residues 139–143 (NFHRA) lie on the Extracellular side of the membrane. The helical transmembrane segment at 144–164 (LPLFVITLVTIFFVIWDHLMA) threads the bilayer. Residues 165 to 188 (KYEQRIDDFLSPGRRLLDRHWFWL) are Cytoplasmic-facing. The chain crosses the membrane as a helical span at residues 189-209 (KWVVWSSLILAIILWLSLDTA). The Extracellular segment spans residues 210 to 212 (KLG). Residues 213–234 (QQNLVSFGGLIMYLILLFLFSK) form a helical membrane-spanning segment. Topologically, residues 235–242 (HPTRVYWR) are cytoplasmic. A helical transmembrane segment spans residues 243–262 (PVFWGIGLQFLLGLLILRTR). At 263–299 (PGFVAFDWMGRQVQTFLGYTDTGARFVFGEKYTDHFF) the chain is on the extracellular side. The helical transmembrane segment at 300 to 320 (AFKILPIVVFFSTVMSMLYYL) threads the bilayer. Residues 321–344 (GLMQWIIRKVGWLMLVTMGSSPIE) lie on the Cytoplasmic side of the membrane. An intramembrane region (helical) is located at residues 345–363 (SVVAAGNIFIGQTESPLLV). Residues 364 to 376 (QPYLPHVTKSELH) are Cytoplasmic-facing. The chain crosses the membrane as a helical span at residues 377–399 (TIMTAGFATIAGSVLGAYISFGV). Residues 400 to 401 (SS) lie on the Extracellular side of the membrane. Residues 402-423 (THLLTASVMSAPAALAVAKLFW) traverse the membrane as a helical segment. Residues 424–458 (PETEKPKITLKSAMKMENGDSRNLLEAASQGASSS) lie on the Cytoplasmic side of the membrane. A helical membrane pass occupies residues 459–484 (IPLVANIAANLIAFLALLSFVNSALS). Over 485-522 (WFGSMFNYPELSFELICSYIFMPFSFMMGVDWQDSFMV) the chain is Extracellular. Residues 523–542 (AKLIGYKTFFNEFVAYDHLS) constitute an intramembrane region (helical). Residues 543–581 (KLINLRKAAGPKFVNGVQQYMSIRSETIATYALCGFANF) are Extracellular-facing. The helical transmembrane segment at 582–592 (GSLGIVIGGLT) threads the bilayer. At 593-605 (SIAPSRKRDIASG) the chain is on the cytoplasmic side. Residues 606–628 (AMRALIAGTIACFMTACIAGILS) form a helical membrane-spanning segment. The Extracellular segment spans residues 629–703 (DTPVDINCHH…LNCNWIPNKL (75 aa)).

The protein belongs to the concentrative nucleoside transporter (CNT) (TC 2.A.41) family. In terms of assembly, homotrimer.

It is found in the cell membrane. It carries out the reaction thymidine(out) + 2 Na(+)(out) = thymidine(in) + 2 Na(+)(in). The catalysed reaction is cytidine(out) + 2 Na(+)(out) = cytidine(in) + 2 Na(+)(in). The enzyme catalyses uridine(out) + 2 Na(+)(out) = uridine(in) + 2 Na(+)(in). It catalyses the reaction adenosine(out) + 2 Na(+)(out) = adenosine(in) + 2 Na(+)(in). It carries out the reaction guanosine(out) + 2 Na(+)(out) = guanosine(in) + 2 Na(+)(in). The catalysed reaction is inosine(out) + 2 Na(+)(out) = inosine(in) + 2 Na(+)(in). Sodium-dependent, pyrimidine- and purine-selective. Involved in the homeostasis of endogenous nucleosides. Exhibits the transport characteristics of the nucleoside transport system cib or N3 subtype (N3/cib) (with marked transport of both thymidine and inosine). Employs a 2:1 sodium/nucleoside ratio. Also able to transport gemcitabine, 3'-azido-3'-deoxythymidine (AZT), ribavirin and 3-deazauridine. The chain is Solute carrier family 28 member 3 (Slc28a3) from Mus musculus (Mouse).